Consider the following 694-residue polypeptide: Elongation factor G (694 aa).

The tr-type G domain occupies 10–285 (EKTRNIGIMA…GVVDYLPSPL (276 aa)). Residues 19-26 (AHIDAGKT), 83-87 (DTPGH), and 137-140 (NKMD) contribute to the GTP site.

The protein belongs to the TRAFAC class translation factor GTPase superfamily. Classic translation factor GTPase family. EF-G/EF-2 subfamily.

It is found in the cytoplasm. Functionally, catalyzes the GTP-dependent ribosomal translocation step during translation elongation. During this step, the ribosome changes from the pre-translocational (PRE) to the post-translocational (POST) state as the newly formed A-site-bound peptidyl-tRNA and P-site-bound deacylated tRNA move to the P and E sites, respectively. Catalyzes the coordinated movement of the two tRNA molecules, the mRNA and conformational changes in the ribosome. This is Elongation factor G from Lactobacillus delbrueckii subsp. bulgaricus (strain ATCC 11842 / DSM 20081 / BCRC 10696 / JCM 1002 / NBRC 13953 / NCIMB 11778 / NCTC 12712 / WDCM 00102 / Lb 14).